Here is a 151-residue protein sequence, read N- to C-terminus: CHSLRYDRLYSRRNTCLYLLLTWMLTALATVPNFLVGSLKYDPRVFSCTFTQTASSSYTVCVVLIHFLVPLGVVSFCYLRIWTLVIRVKGRVRPNPKVRAADLRNFLTMFVVFVLFAVCWAPLNFIGLAVAINPAKVAPNIPEWLFVTSYF.

Over Cys-1–Arg-13 the chain is Cytoplasmic. Residues Asn-14–Phe-34 traverse the membrane as a helical segment. Residues Leu-35–Tyr-58 are Extracellular-facing. The chain crosses the membrane as a helical span at residues Thr-59–Leu-79. The Cytoplasmic portion of the chain corresponds to Arg-80 to Met-109. A helical transmembrane segment spans residues Phe-110–Val-130. Topologically, residues Ala-131–Glu-143 are extracellular. A helical membrane pass occupies residues Trp-144–Phe-151.

Belongs to the G-protein coupled receptor 1 family.

The protein resides in the cell membrane. In terms of biological role, high affinity receptor for melatonin. The activity of this receptor is mediated by pertussis toxin sensitive G proteins that inhibits adenylate cyclase activity. In Danio rerio (Zebrafish), this protein is Melatonin receptor type 1C (mtnr1c).